Consider the following 65-residue polypeptide: Large ribosomal subunit protein uL29 (65 aa).

It belongs to the universal ribosomal protein uL29 family.

The sequence is that of Large ribosomal subunit protein uL29 from Natranaerobius thermophilus (strain ATCC BAA-1301 / DSM 18059 / JW/NM-WN-LF).